A 379-amino-acid polypeptide reads, in one-letter code: Cytochrome b (379 aa).

The next 4 helical transmembrane spans lie at 33–53 (FGSL…FLAM), 77–98 (WMIR…FIHV), 113–133 (WNVG…GYVL), and 178–198 (FFAL…IHLL). Heme b is bound by residues His83 and His97. The heme b site is built by His182 and His196. His201 is an a ubiquinone binding site. The next 4 helical transmembrane spans lie at 226-246 (TKDF…ALFY), 288-308 (LGGV…PFLQ), 320-340 (LSQF…WIGG), and 347-367 (FISI…FIMP).

Belongs to the cytochrome b family. The cytochrome bc1 complex contains 11 subunits: 3 respiratory subunits (MT-CYB, CYC1 and UQCRFS1), 2 core proteins (UQCRC1 and UQCRC2) and 6 low-molecular weight proteins (UQCRH/QCR6, UQCRB/QCR7, UQCRQ/QCR8, UQCR10/QCR9, UQCR11/QCR10 and a cleavage product of UQCRFS1). This cytochrome bc1 complex then forms a dimer. Heme b is required as a cofactor.

The protein resides in the mitochondrion inner membrane. Functionally, component of the ubiquinol-cytochrome c reductase complex (complex III or cytochrome b-c1 complex) that is part of the mitochondrial respiratory chain. The b-c1 complex mediates electron transfer from ubiquinol to cytochrome c. Contributes to the generation of a proton gradient across the mitochondrial membrane that is then used for ATP synthesis. In Lepilemur septentrionalis (Northern sportive lemur), this protein is Cytochrome b (MT-CYB).